Here is an 849-residue protein sequence, read N- to C-terminus: DNA mismatch repair protein MutS (849 aa).

Position 665–672 (665–672) interacts with ATP; the sequence is GPNMAGKS.

Belongs to the DNA mismatch repair MutS family.

In terms of biological role, this protein is involved in the repair of mismatches in DNA. It is possible that it carries out the mismatch recognition step. This protein has a weak ATPase activity. The protein is DNA mismatch repair protein MutS of Wolbachia pipientis wMel.